Reading from the N-terminus, the 190-residue chain is Inner membrane-spanning protein YciB (190 aa).

Helical transmembrane passes span 3–23, 24–44, 49–69, 76–96, 121–141, and 149–169; these read FLFDLFPVILFFAAFKVAGIY, VATTVAMVATVLQIAWVWFKH, AMQWLSLLIIGVFGGATLIFH, WKPTVLYWLFGVVLLGSVVVV, LVWALFFLVMGCLNLYVAYNF, and FKLFGSMGLMVVFILAQSVWL.

Belongs to the YciB family.

The protein localises to the cell inner membrane. Plays a role in cell envelope biogenesis, maintenance of cell envelope integrity and membrane homeostasis. The polypeptide is Inner membrane-spanning protein YciB (Ralstonia pickettii (strain 12J)).